We begin with the raw amino-acid sequence, 152 residues long: UPF0266 membrane protein CKO_01158 (152 aa).

Helical transmembrane passes span 6 to 26 (LVLVLFIVALLAYAIYDQFIM), 45 to 65 (VDSVIFVGLVAILIYNNVTSH), and 67 to 87 (AQITTWLLCALALMGFYIFWV).

The protein belongs to the UPF0266 family.

It localises to the cell inner membrane. This Citrobacter koseri (strain ATCC BAA-895 / CDC 4225-83 / SGSC4696) protein is UPF0266 membrane protein CKO_01158.